The sequence spans 20 residues: Bulb protein (20 aa).

The interval 1–20 (APDVHTRXTQNGLPPGXLPS) is disordered.

The protein is Bulb protein of Narcissus pseudonarcissus (Daffodil).